A 228-amino-acid polypeptide reads, in one-letter code: Orotidine 5'-phosphate decarboxylase (228 aa).

Residues Asp11, Lys33, Asp60–Thr69, Thr117, Arg178, Gln186, Gly206, and Arg207 contribute to the substrate site. Residue Lys62 is the Proton donor of the active site.

The protein belongs to the OMP decarboxylase family. Type 1 subfamily. Homodimer.

It catalyses the reaction orotidine 5'-phosphate + H(+) = UMP + CO2. It participates in pyrimidine metabolism; UMP biosynthesis via de novo pathway; UMP from orotate: step 2/2. Functionally, catalyzes the decarboxylation of orotidine 5'-monophosphate (OMP) to uridine 5'-monophosphate (UMP). This chain is Orotidine 5'-phosphate decarboxylase, found in Ehrlichia canis (strain Jake).